The primary structure comprises 342 residues: P2Y purinoceptor 12 (342 aa).

Over 1-27 the chain is Extracellular; the sequence is MQAIDNLTSAPGNTSLCTRDYKITQVL. 2 N-linked (GlcNAc...) asparagine glycosylation sites follow: Asn-6 and Asn-13. Disulfide bonds link Cys-17–Cys-270 and Cys-97–Cys-175. The chain crosses the membrane as a helical span at residues 28–50; it reads FPLLYTVLFFVGLITNSLAMRIF. The Cytoplasmic portion of the chain corresponds to 51 to 61; it reads FQIRSKSNFII. A phosphoserine mark is found at Ser-55 and Ser-57. Residues 62–82 form a helical membrane-spanning segment; sequence FLKNTVISDLLMILTFPFKIL. Topologically, residues 83–97 are extracellular; sequence SDAKLGAGPLRTFVC. ADP-binding residues include Arg-93, Cys-97, and Tyr-105. Residues 98–118 form a helical membrane-spanning segment; it reads QVTSVIFYFTMYISISFLGLI. Topologically, residues 119–142 are cytoplasmic; the sequence is TIDRYQKTTRPFKTSNPKNLLGAK. A helical transmembrane segment spans residues 143-162; sequence ILSVLIWAFMFLLSLPNMIL. Residues 156–159, 175–179, His-187, and Asn-191 contribute to the ADP site; these read SLPN and CSFLK. Over 163 to 185 the chain is Extracellular; sequence TNRRPRDKNVKKCSFLKSEFGLV. A helical transmembrane segment spans residues 186 to 207; the sequence is WHEIVNYICQVIFWINFLIVIV. The Cytoplasmic portion of the chain corresponds to 208 to 233; sequence CYTLITKELYRSYVRTRGVGKVPRKK. Residues 234–259 form a helical membrane-spanning segment; the sequence is VNVKVFIIIAVFFICFVPFHFARIPY. ADP is bound by residues 256–259, Gln-263, and Lys-280; that span reads RIPY. Residues 260 to 278 lie on the Extracellular side of the membrane; sequence TLSQTRDVFDCAAENTLFY. The helical transmembrane segment at 279–298 threads the bilayer; the sequence is VKESTLWLTSLNACLDPFIY. Residues 299 to 342 are Cytoplasmic-facing; that stretch reads FFLCKSFRNSLISMLKCPNSATSQSQDNRKKEQDGGDPNEETPM. The interval 317-342 is disordered; that stretch reads NSATSQSQDNRKKEQDGGDPNEETPM. Acidic residues predominate over residues 333 to 342; that stretch reads GGDPNEETPM.

This sequence belongs to the G-protein coupled receptor 1 family.

Its subcellular location is the cell membrane. Its function is as follows. Receptor for ADP and ATP coupled to G-proteins that inhibit the adenylyl cyclase second messenger system. Required for normal platelet aggregation and blood coagulation. In Macaca fascicularis (Crab-eating macaque), this protein is P2Y purinoceptor 12 (P2RY12).